We begin with the raw amino-acid sequence, 357 residues long: UDP-N-acetylglucosamine--N-acetylmuramyl-(pentapeptide) pyrophosphoryl-undecaprenol N-acetylglucosamine transferase (357 aa).

UDP-N-acetyl-alpha-D-glucosamine is bound by residues 13 to 15, Arg166, Ser197, and Gln292; that span reads SAG.

Belongs to the glycosyltransferase 28 family. MurG subfamily.

Its subcellular location is the cell membrane. The catalysed reaction is di-trans,octa-cis-undecaprenyl diphospho-N-acetyl-alpha-D-muramoyl-L-alanyl-D-glutamyl-meso-2,6-diaminopimeloyl-D-alanyl-D-alanine + UDP-N-acetyl-alpha-D-glucosamine = di-trans,octa-cis-undecaprenyl diphospho-[N-acetyl-alpha-D-glucosaminyl-(1-&gt;4)]-N-acetyl-alpha-D-muramoyl-L-alanyl-D-glutamyl-meso-2,6-diaminopimeloyl-D-alanyl-D-alanine + UDP + H(+). The protein operates within cell wall biogenesis; peptidoglycan biosynthesis. Cell wall formation. Catalyzes the transfer of a GlcNAc subunit on undecaprenyl-pyrophosphoryl-MurNAc-pentapeptide (lipid intermediate I) to form undecaprenyl-pyrophosphoryl-MurNAc-(pentapeptide)GlcNAc (lipid intermediate II). The polypeptide is UDP-N-acetylglucosamine--N-acetylmuramyl-(pentapeptide) pyrophosphoryl-undecaprenol N-acetylglucosamine transferase (Clostridium novyi (strain NT)).